A 715-amino-acid chain; its full sequence is Lactococcin transport/processing ATP-binding protein LcnC-like (715 aa).

Residues 11–138 (QVDEMDCGCA…SEWTGISLFL (128 aa)) enclose the Peptidase C39 domain. Residue cysteine 17 is part of the active site. The next 5 membrane-spanning stretches (helical) occupy residues 167–187 (VILN…LGSY), 197–217 (IPNA…LTYI), 237–257 (LAID…MSFF), 282–302 (TILS…ILGL), and 307–327 (LFLL…IFTP). In terms of domain architecture, ABC transmembrane type-1 spans 168-450 (ILNIVIASFI…IINLQTKLQK (283 aa)). Positions 482–715 (LNMSEISYQY…NGFYAQLYHN (234 aa)) constitute an ABC transporter domain. Residue 515–522 (GISGSGKS) coordinates ATP.

It belongs to the ABC transporter superfamily. HlyB family.

It localises to the cell membrane. Functionally, involved in the export process of a bacteriocin lactococcin. The protein is Lactococcin transport/processing ATP-binding protein LcnC-like (lcnC) of Lactococcus lactis subsp. lactis (strain IL1403) (Streptococcus lactis).